The following is a 397-amino-acid chain: Translocase of chloroplast 34 homolog, chloroplastic (397 aa).

The segment at 1-72 (MAQPPRPAEE…SQPWAGLNRL (72 aa)) is disordered. Acidic residues-rich tracts occupy residues 10 to 32 (EYDDDVQEDEDELKEGELDDDES) and 44 to 63 (AGDEEAEDDEQDEEDGDEDS). In terms of domain architecture, AIG1-type G spans 90–321 (RKQLTVLLLG…YKYHPRLSSK (232 aa)). The tract at residues 99–106 (GKSSVGKS) is G1. GTP contacts are provided by residues 102–107 (SVGKSS) and 121–126 (QAFKLQ). Serine 106 provides a ligand contact to Mg(2+). The homodimerization stretch occupies residues 121–124 (QAFK). Positions 126–130 (QADTD) are G2. The interval 155-158 (DTCG) is G3. The tract at residues 193-198 (RLDLYR) is homodimerization. The tract at residues 227–230 (THAN) is G4. Residues histidine 228 and 271 to 272 (EN) each bind GTP. The G5 stretch occupies residues 271–273 (ENS). Residues 329 to 349 (LLPVAIAAEVLFYRRFLHPRL) traverse the membrane as a helical segment. The AKR2A-binding sequence (ABS) required for chloroplast outer envelope membrane targeting signature appears at 350–358 (DDNQRRVER).

This sequence belongs to the TRAFAC class TrmE-Era-EngA-EngB-Septin-like GTPase superfamily. AIG1/Toc34/Toc159-like paraseptin GTPase family. TOC34 subfamily. As to quaternary structure, homodimer, heterodimer with other TOC proteins, and monomer. Part of the TOC core complex that includes 1 protein for the specific recognition of transit peptides surrounded by a ring composed of four proteins forming translocation channels, and four to five GTP-binding proteins providing energy. This core complex can interact with components of the TIC complex to form a larger import complex. Interacts with ARSA1. Mg(2+) is required as a cofactor.

It localises to the plastid. Its subcellular location is the chloroplast outer membrane. GTPase involved in protein precursor import into chloroplasts. Seems to recognize chloroplast-destined precursor proteins and regulate their presentation to the translocation channel through GTP hydrolysis. Functions as an essential component of the outer chloroplast membrane translocon (TOC) complex, which, in turn, catalyzes the import of nucleus-encoded precursor polypeptides from the cytoplasm to the chloroplast. The chain is Translocase of chloroplast 34 homolog, chloroplastic from Chlamydomonas reinhardtii (Chlamydomonas smithii).